We begin with the raw amino-acid sequence, 537 residues long: Aminopeptidase Y (537 aa).

Positions Met1–Ala21 are cleaved as a signal peptide. The propeptide occupies Tyr22 to Asn56. Residues Asn85, Asn96, Asn115, Asn150, and Asn162 are each glycosylated (N-linked (GlcNAc...) asparagine). His314 and Asp326 together coordinate Zn(2+). The Proton acceptor role is filled by Glu358. Glu359 contributes to the Zn(2+) binding site. N-linked (GlcNAc...) asparagine glycosylation occurs at Asn371. Asp387 lines the Zn(2+) pocket. N-linked (GlcNAc...) asparagine glycosylation occurs at Asn427. His472 contributes to the Zn(2+) binding site. Asn480 carries N-linked (GlcNAc...) asparagine glycosylation.

It belongs to the peptidase M28 family. M28A subfamily. In terms of assembly, monomer. Requires Zn(2+) as cofactor.

It localises to the vacuole. It catalyses the reaction Preferentially, release of N-terminal lysine.. The chain is Aminopeptidase Y (APE3) from Saccharomyces cerevisiae (strain ATCC 204508 / S288c) (Baker's yeast).